A 342-amino-acid polypeptide reads, in one-letter code: Platelet-activating factor receptor (342 aa).

The Extracellular segment spans residues 1–16 (MEPNNSFRVDSEFRYT). Asparagine 4 carries an N-linked (GlcNAc...) asparagine glycan. A helical transmembrane segment spans residues 17–38 (LFPIFYSIVFVLGVIANSYVLW). Residues 39 to 54 (VFARLYPSKKFNEIKI) are Cytoplasmic-facing. Residues 55–74 (FMVNLTMADLLFLVTLPLWI) traverse the membrane as a helical segment. Over 75–91 (VYYYNQGDWILPKFLCN) the chain is Extracellular. Residues cysteine 90 and cysteine 173 are joined by a disulfide bond. A helical membrane pass occupies residues 92–113 (LAGCFFFINTYCSVAFLAVITY). Residues 114 to 133 (NRFQAVTRPIKTAQATTRKR) are Cytoplasmic-facing. A helical transmembrane segment spans residues 134–155 (GILLSLIIWVSIVGAASYFFVL). Residues 156 to 184 (DSTNREPNKTGSANITRCFEHYEKGSIPV) lie on the Extracellular side of the membrane. Asparagine 163 and asparagine 169 each carry an N-linked (GlcNAc...) asparagine glycan. Residues 185-205 (LTIHIFLVFSFFLVFLIILFC) traverse the membrane as a helical segment. The Cytoplasmic segment spans residues 206 to 233 (NLVIIRTLLTQQVQIQRNAEVKRRALWM). A helical membrane pass occupies residues 234-254 (VCTVLAVFIICFVPHHLVQLP). Topologically, residues 255–276 (WTLAELGFQDTDFHQAINDAHQ) are extracellular. A helical transmembrane segment spans residues 277–296 (VTLCLLSTNCVLDPIIYCFL). Topologically, residues 297–342 (TKKFRKHLTEKLYSMRESRKCSRATSETGTEVVMQLKDVPVKSLKY) are cytoplasmic.

The protein belongs to the G-protein coupled receptor 1 family. Interacts with ARRB1. As to expression, found in oviductal epithelial and stroma cells. Levels in the oviduct are raised at days 2-4 of both pregnancy and of the estrus cycle. In the endometrium, localization is predominantly to the apical borders of glandular and luminal epithelial cells. Expressed at lower levels in endometrial stromal cells. Levels in the endometrium are increased at day 20 of pregnancy (at protein level).

The protein localises to the cell membrane. In terms of biological role, receptor for platelet activating factor, a chemotactic phospholipid mediator that possesses potent inflammatory, smooth-muscle contractile and hypotensive activity. Seems to mediate its action via a G protein that activates a phosphatidylinositol-calcium second messenger system. May be involved in the morphological and physical modifications of the oviduct and uterus during the estrus cycle and early pregnancy. The polypeptide is Platelet-activating factor receptor (Bos taurus (Bovine)).